Here is a 366-residue protein sequence, read N- to C-terminus: Holliday junction branch migration complex subunit RuvB (366 aa).

The interval 1 to 49 is disordered; that stretch reads MAIISSKKQPPEPNGQPNKRPESAPSVPKEKVLQPEAAIDEQGKQEESI. Residues 13 to 210 are large ATPase domain (RuvB-L); it reads PNGQPNKRPE…FGLIQKLRFY (198 aa). ATP is bound by residues I49, R50, G91, K94, T95, T96, 157 to 159, R200, Y210, and R247; that span reads EDY. Residue T95 coordinates Mg(2+). The segment at 211 to 281 is small ATPAse domain (RuvB-S); that stretch reads EVDELSQIVL…IAAEALQLFQ (71 aa). The interval 284 to 366 is head domain (RuvB-H); it reads PCGLDWTDRR…TPPNEQLSLL (83 aa). Positions 339 and 344 each coordinate DNA.

It belongs to the RuvB family. As to quaternary structure, homohexamer. Forms an RuvA(8)-RuvB(12)-Holliday junction (HJ) complex. HJ DNA is sandwiched between 2 RuvA tetramers; dsDNA enters through RuvA and exits via RuvB. An RuvB hexamer assembles on each DNA strand where it exits the tetramer. Each RuvB hexamer is contacted by two RuvA subunits (via domain III) on 2 adjacent RuvB subunits; this complex drives branch migration. In the full resolvosome a probable DNA-RuvA(4)-RuvB(12)-RuvC(2) complex forms which resolves the HJ.

The protein resides in the cytoplasm. It carries out the reaction ATP + H2O = ADP + phosphate + H(+). Functionally, the RuvA-RuvB-RuvC complex processes Holliday junction (HJ) DNA during genetic recombination and DNA repair, while the RuvA-RuvB complex plays an important role in the rescue of blocked DNA replication forks via replication fork reversal (RFR). RuvA specifically binds to HJ cruciform DNA, conferring on it an open structure. The RuvB hexamer acts as an ATP-dependent pump, pulling dsDNA into and through the RuvAB complex. RuvB forms 2 homohexamers on either side of HJ DNA bound by 1 or 2 RuvA tetramers; 4 subunits per hexamer contact DNA at a time. Coordinated motions by a converter formed by DNA-disengaged RuvB subunits stimulates ATP hydrolysis and nucleotide exchange. Immobilization of the converter enables RuvB to convert the ATP-contained energy into a lever motion, pulling 2 nucleotides of DNA out of the RuvA tetramer per ATP hydrolyzed, thus driving DNA branch migration. The RuvB motors rotate together with the DNA substrate, which together with the progressing nucleotide cycle form the mechanistic basis for DNA recombination by continuous HJ branch migration. Branch migration allows RuvC to scan DNA until it finds its consensus sequence, where it cleaves and resolves cruciform DNA. The sequence is that of Holliday junction branch migration complex subunit RuvB from Nostoc sp. (strain PCC 7120 / SAG 25.82 / UTEX 2576).